The chain runs to 857 residues: Median body protein (857 aa).

Coiled coils occupy residues 169 to 546 (HNAL…MRTE) and 571 to 793 (LAHL…TKAM).

Its subcellular location is the cytoplasm. The protein localises to the cytoskeleton. Structural component of the ventral disk involved in maintanance of a domed conformation of the disk required for proper attachment. May have a role in immobilizing the microtubules between cell divisions. The sequence is that of Median body protein from Giardia intestinalis (strain ATCC 50803 / WB clone C6) (Giardia lamblia).